The sequence spans 739 residues: Gamma-tubulin complex component 4 homolog (739 aa).

The protein belongs to the TUBGCP family.

The protein resides in the cytoplasm. The protein localises to the cytoskeleton. Its subcellular location is the microtubule organizing center. Functionally, gamma-tubulin complex is necessary for microtubule nucleation at the microtubule organizing centers (MTOCs). The sequence is that of Gamma-tubulin complex component 4 homolog (85P) from Medicago truncatula (Barrel medic).